A 65-amino-acid chain; its full sequence is Large ribosomal subunit protein bL35 (65 aa).

Residues 1–28 (MPKMKTNRSAAKRFGKTGSGKFTRRRQN) are disordered.

The protein belongs to the bacterial ribosomal protein bL35 family.

This chain is Large ribosomal subunit protein bL35, found in Solidesulfovibrio magneticus (strain ATCC 700980 / DSM 13731 / RS-1) (Desulfovibrio magneticus).